Here is an 888-residue protein sequence, read N- to C-terminus: Leukocyte tyrosine kinase receptor (888 aa).

The first 16 residues, 1–16, serve as a signal peptide directing secretion; that stretch reads MGCSHRLLLWLGAAGT. Topologically, residues 17 to 421 are extracellular; sequence ILCSNSEFQT…CMDLPTTASP (405 aa). 2 cysteine pairs are disulfide-bonded: Cys-73-Cys-86 and Cys-168-Cys-179. The interval 226-294 is disordered; it reads LVAAGGGGRS…RSPREGAEGG (69 aa). The span at 260-273 shows a compositional bias: gly residues; that stretch reads GSGGRGGAAGGGSG. Cys-297 and Cys-319 are disulfide-bonded. N-linked (GlcNAc...) asparagine glycosylation is found at Asn-377 and Asn-409. The chain crosses the membrane as a helical span at residues 422–446; sequence LILMGAVVAALALSLLMMCAVLILV. The Cytoplasmic segment spans residues 447 to 888; the sequence is NQKCQGLWGT…SSSSSIPGIQ (442 aa). The region spanning 506–782 is the Protein kinase domain; the sequence is VTLLRALGHG…IQYCTQDPDV (277 aa). Residues 512–520 and Lys-540 each bind ATP; that span reads LGHGAFGEV. Asp-639 serves as the catalytic Proton acceptor. A Phosphotyrosine; by autocatalysis modification is found at Tyr-672. The tract at residues 857-888 is disordered; that stretch reads TYGSWTPRGPQGEDTGIEHCNGSSSSSIPGIQ. The span at 877 to 888 shows a compositional bias: polar residues; sequence NGSSSSSIPGIQ.

Belongs to the protein kinase superfamily. Tyr protein kinase family. Insulin receptor subfamily. As to quaternary structure, homodimer; homodimerizes following ligand-binding. Part of a complex including LTK, TNK2 and GRB2, in which GRB2 promotes LTK recruitment by TNK2. In terms of processing, phosphorylated at tyrosine residues by autocatalysis, which activates kinase activity. As to expression, subsets of lymphoid and neuronal cells.

The protein resides in the cell membrane. Its subcellular location is the endoplasmic reticulum. It catalyses the reaction L-tyrosyl-[protein] + ATP = O-phospho-L-tyrosyl-[protein] + ADP + H(+). Its activity is regulated as follows. Activated by ligand-binding, leading to homodimerization and autophosphorylation. In terms of biological role, receptor with a tyrosine-protein kinase activity. Following activation by ALKAL1 or ALKAL2 ligands at the cell surface, transduces an extracellular signal into an intracellular response. Ligand-binding to the extracellular domain induces tyrosine kinase activation, leading to activation of the mitogen-activated protein kinase (MAPK) pathway. Phosphorylates almost exclusively at the first tyrosine of the Y-x-x-x-Y-Y motif. The exact function of this protein is not known; studies with chimeric proteins demonstrate its ability to promote growth and specifically neurite outgrowth, and cell survival. Involved in regulation of the secretory pathway involving endoplasmic reticulum (ER) export sites (ERESs) and ER to Golgi transport. In Mus musculus (Mouse), this protein is Leukocyte tyrosine kinase receptor.